The chain runs to 800 residues: Receptor-like protein 47 (800 aa).

A signal peptide spans 1–31 (MMHSSSVRRMITVKWSLCLIFCLTNSILVSA). Topologically, residues 32 to 759 (KHLCLPDQKD…QDEDKEEEDQ (728 aa)) are extracellular. N-linked (GlcNAc...) asparagine glycans are attached at residues N66 and N102. LRR repeat units lie at residues 109–131 (QHLQ…SIGN), 133–156 (KRLK…LGNL), 157–179 (SYLT…SMGN), 190–213 (LSSV…NMSS), 214–238 (LSKL…LFMI), 240–262 (SLIL…NISS), 263–288 (PSNL…IFSP), 294–311 (YLDV…VSLP), 312–334 (SPIE…LRNQ), 335–358 (TSLE…LWSL), 360–383 (ELRY…VIQG), 385–406 (RELL…LLPV), 407–430 (VSMN…ICEL), 431–453 (DNLR…CFEN), 455–477 (HLYV…AISH), 479–500 (LQSF…LINC), 502–523 (DIEF…WLEL), 524–550 (LPNL…SLSF), 551–574 (SRLR…YFVG), 621–645 (FTIY…IGLL), 646–669 (KEVI…LSNL), 670–693 (SNLQ…LGKL), and 695–718 (FLEW…QIQT). N-linked (GlcNAc...) asparagine glycosylation occurs at N155. N-linked (GlcNAc...) asparagine glycosylation is present at N210. The N-linked (GlcNAc...) asparagine glycan is linked to N259. N-linked (GlcNAc...) asparagine glycans are attached at residues N323 and N333. N365 carries N-linked (GlcNAc...) asparagine glycosylation. Residues N442, N465, N499, and N514 are each glycosylated (N-linked (GlcNAc...) asparagine). The N-linked (GlcNAc...) asparagine glycan is linked to N668. N700 carries N-linked (GlcNAc...) asparagine glycosylation. A helical transmembrane segment spans residues 760–780 (VFSWIAAAIGYVPGVVCGLTI). Residues 781–800 (GHILVSHKRDWFMRIVSFFT) lie on the Cytoplasmic side of the membrane.

The protein belongs to the RLP family.

It is found in the cell membrane. The polypeptide is Receptor-like protein 47 (Arabidopsis thaliana (Mouse-ear cress)).